The primary structure comprises 249 residues: MIT domain-containing protein 1 (249 aa).

An MIT domain is found at 8–86 (QDSDSTAAVA…KYLDQEKEDG (79 aa)). Residues 168–231 (SGLEEIKQSL…SLGYYDLDLR (64 aa)) form an important for association with membranes region.

In terms of assembly, homodimer. Interacts (via MIT domain) with CHMP1A, CHMP1B, CHMP2A and IST1.

It localises to the late endosome membrane. It is found in the midbody. The protein resides in the membrane. Its function is as follows. Required for efficient abscission at the end of cytokinesis, together with components of the ESCRT-III complex. The polypeptide is MIT domain-containing protein 1 (Mitd1) (Mus musculus (Mouse)).